A 453-amino-acid polypeptide reads, in one-letter code: Ribosomal protein uS12 methylthiotransferase RimO (453 aa).

Residues 6 to 116 enclose the MTTase N-terminal domain; the sequence is PKVGFVSLGC…VMEAVHEALP (111 aa). [4Fe-4S] cluster contacts are provided by cysteine 15, cysteine 51, cysteine 80, cysteine 147, cysteine 151, and cysteine 154. Residues 133-370 enclose the Radical SAM core domain; sequence LTPRHYAYLK…MEKQAQISAA (238 aa). A TRAM domain is found at 373–441; sequence EAKIGTVQQC…DHDLYGDALP (69 aa).

It belongs to the methylthiotransferase family. RimO subfamily. Requires [4Fe-4S] cluster as cofactor.

It is found in the cytoplasm. It catalyses the reaction L-aspartate(89)-[ribosomal protein uS12]-hydrogen + (sulfur carrier)-SH + AH2 + 2 S-adenosyl-L-methionine = 3-methylsulfanyl-L-aspartate(89)-[ribosomal protein uS12]-hydrogen + (sulfur carrier)-H + 5'-deoxyadenosine + L-methionine + A + S-adenosyl-L-homocysteine + 2 H(+). In terms of biological role, catalyzes the methylthiolation of an aspartic acid residue of ribosomal protein uS12. This chain is Ribosomal protein uS12 methylthiotransferase RimO, found in Stenotrophomonas maltophilia (strain R551-3).